We begin with the raw amino-acid sequence, 420 residues long: 3-phosphoshikimate 1-carboxyvinyltransferase (420 aa).

3 residues coordinate 3-phosphoshikimate: Lys26, Ser27, and Arg31. A phosphoenolpyruvate-binding site is contributed by Lys26. The phosphoenolpyruvate site is built by Gly97 and Arg125. 6 residues coordinate 3-phosphoshikimate: Ser170, Ser171, Gln172, Asp297, Asn320, and Lys324. Phosphoenolpyruvate is bound at residue Gln172. The Proton acceptor role is filled by Asp297. 3 residues coordinate phosphoenolpyruvate: Arg328, Arg375, and Lys400.

The protein belongs to the EPSP synthase family. Monomer.

Its subcellular location is the cytoplasm. It catalyses the reaction 3-phosphoshikimate + phosphoenolpyruvate = 5-O-(1-carboxyvinyl)-3-phosphoshikimate + phosphate. It functions in the pathway metabolic intermediate biosynthesis; chorismate biosynthesis; chorismate from D-erythrose 4-phosphate and phosphoenolpyruvate: step 6/7. Its function is as follows. Catalyzes the transfer of the enolpyruvyl moiety of phosphoenolpyruvate (PEP) to the 5-hydroxyl of shikimate-3-phosphate (S3P) to produce enolpyruvyl shikimate-3-phosphate and inorganic phosphate. This is 3-phosphoshikimate 1-carboxyvinyltransferase from Rhizobium leguminosarum bv. trifolii (strain WSM2304).